The primary structure comprises 99 residues: Integration host factor subunit alpha (99 aa).

The interval 49 to 71 is disordered; the sequence is FGNFDLRDKNQRPGRNPKTGEDI.

This sequence belongs to the bacterial histone-like protein family. Heterodimer of an alpha and a beta chain.

Its function is as follows. This protein is one of the two subunits of integration host factor, a specific DNA-binding protein that functions in genetic recombination as well as in transcriptional and translational control. In Shewanella frigidimarina (strain NCIMB 400), this protein is Integration host factor subunit alpha.